The chain runs to 161 residues: Lipoprotein signal peptidase (161 aa).

A run of 4 helical transmembrane segments spans residues 8-28 (LKYF…KYLA), 40-60 (ITSF…SLLS), 67-87 (QMIM…YLII), and 91-111 (ITEK…LGNF). Catalysis depends on residues D122 and D140. Residues 136-156 (FNIADSAITCGVVILIAASLF) form a helical membrane-spanning segment.

The protein belongs to the peptidase A8 family.

It localises to the cell inner membrane. The enzyme catalyses Release of signal peptides from bacterial membrane prolipoproteins. Hydrolyzes -Xaa-Yaa-Zaa-|-(S,diacylglyceryl)Cys-, in which Xaa is hydrophobic (preferably Leu), and Yaa (Ala or Ser) and Zaa (Gly or Ala) have small, neutral side chains.. Its pathway is protein modification; lipoprotein biosynthesis (signal peptide cleavage). This protein specifically catalyzes the removal of signal peptides from prolipoproteins. The sequence is that of Lipoprotein signal peptidase from Francisella tularensis subsp. novicida (strain U112).